The sequence spans 383 residues: Flagellum-associated coiled-coil domain-containing protein 1 (383 aa).

The tract at residues 26 to 79 (PYPLPKHPTGKFKPVLPPPISKEHNSLLSQPGKSTVSPRDKVQSGNTESSKAPS) is disordered. Polar residues predominate over residues 51 to 77 (SLLSQPGKSTVSPRDKVQSGNTESSKA). Coiled-coil stretches lie at residues 125 to 220 (TDII…YLKS) and 276 to 359 (KKMN…FQTK). At Lys-354 the chain carries N6-acetyllysine.

In terms of tissue distribution, isoform 1 is specific to germ cells of the testis and localizes to the principal piece of the sperm flagellum. Isoform 2 seems to be expressed mainly in somatic cells of the testis, and is not detected in mature spermatozoa (at protein level). Isoform 2 may also be expressed weakly in brain.

The protein localises to the cytoplasm. It localises to the cytoplasmic granule. The protein resides in the cell projection. Its subcellular location is the cilium. It is found in the flagellum. The sequence is that of Flagellum-associated coiled-coil domain-containing protein 1 from Mus musculus (Mouse).